Consider the following 570-residue polypeptide: Coiled-coil domain-containing protein 22 homolog (570 aa).

Disordered regions lie at residues 110–129 (RQSE…REQL) and 234–280 (LTST…PLEL). The span at 248–257 (TSPTQTSTTA) shows a compositional bias: polar residues. The segment covering 265 to 276 (SSEATATSTTTT) has biased composition (low complexity). Coiled coils occupy residues 308 to 471 (ELKI…LQRQ) and 529 to 570 (GEKL…ITVG).

Belongs to the CCDC22 family.

This Drosophila willistoni (Fruit fly) protein is Coiled-coil domain-containing protein 22 homolog.